The following is a 1384-amino-acid chain: DNA-directed RNA polymerase subunit beta (1384 aa).

This sequence belongs to the RNA polymerase beta chain family. The RNAP catalytic core consists of 2 alpha, 1 beta, 1 beta' and 1 omega subunit. When a sigma factor is associated with the core the holoenzyme is formed, which can initiate transcription.

It catalyses the reaction RNA(n) + a ribonucleoside 5'-triphosphate = RNA(n+1) + diphosphate. Functionally, DNA-dependent RNA polymerase catalyzes the transcription of DNA into RNA using the four ribonucleoside triphosphates as substrates. The polypeptide is DNA-directed RNA polymerase subunit beta (Xylella fastidiosa (strain M12)).